We begin with the raw amino-acid sequence, 172 residues long: Translation initiation factor IF-3 (172 aa).

It belongs to the IF-3 family. Monomer.

The protein resides in the cytoplasm. Functionally, IF-3 binds to the 30S ribosomal subunit and shifts the equilibrium between 70S ribosomes and their 50S and 30S subunits in favor of the free subunits, thus enhancing the availability of 30S subunits on which protein synthesis initiation begins. This chain is Translation initiation factor IF-3, found in Sulfurimonas denitrificans (strain ATCC 33889 / DSM 1251) (Thiomicrospira denitrificans (strain ATCC 33889 / DSM 1251)).